The sequence spans 283 residues: Thymidylate synthase (283 aa).

A dUMP-binding site is contributed by Arg-22. The active-site Nucleophile is the Cys-160. DUMP-binding positions include 180-183, Asn-191, and 221-223; these read RSCD and HIY. Residue Asp-183 participates in (6R)-5,10-methylene-5,6,7,8-tetrahydrofolate binding. Ser-282 serves as a coordination point for (6R)-5,10-methylene-5,6,7,8-tetrahydrofolate.

The protein belongs to the thymidylate synthase family. Bacterial-type ThyA subfamily. Homodimer.

It localises to the cytoplasm. It carries out the reaction dUMP + (6R)-5,10-methylene-5,6,7,8-tetrahydrofolate = 7,8-dihydrofolate + dTMP. It functions in the pathway pyrimidine metabolism; dTTP biosynthesis. Catalyzes the reductive methylation of 2'-deoxyuridine-5'-monophosphate (dUMP) to 2'-deoxythymidine-5'-monophosphate (dTMP) while utilizing 5,10-methylenetetrahydrofolate (mTHF) as the methyl donor and reductant in the reaction, yielding dihydrofolate (DHF) as a by-product. This enzymatic reaction provides an intracellular de novo source of dTMP, an essential precursor for DNA biosynthesis. The sequence is that of Thymidylate synthase from Marinomonas sp. (strain MWYL1).